The chain runs to 50 residues: Protein PsbN (50 aa).

The chain crosses the membrane as a helical span at residues 14–34; the sequence is VAVTILAVLLALTGFGLWTAF.

It belongs to the PsbN family.

It is found in the cellular thylakoid membrane. Functionally, may play a role in photosystem I and II biogenesis. The polypeptide is Protein PsbN (Prochlorococcus marinus subsp. pastoris (strain CCMP1986 / NIES-2087 / MED4)).